The primary structure comprises 40 residues: MADTTGRIPLWLIGTVTGIIVIGLLGVFFYGSYSGLGSSL.

A helical membrane pass occupies residues Ile-8–Phe-28.

It belongs to the PsbJ family. As to quaternary structure, PSII is composed of 1 copy each of membrane proteins PsbA, PsbB, PsbC, PsbD, PsbE, PsbF, PsbH, PsbI, PsbJ, PsbK, PsbL, PsbM, PsbT, PsbX, PsbY, PsbZ, Psb30/Ycf12, at least 3 peripheral proteins of the oxygen-evolving complex and a large number of cofactors. It forms dimeric complexes.

It is found in the plastid. It localises to the chloroplast thylakoid membrane. In terms of biological role, one of the components of the core complex of photosystem II (PSII). PSII is a light-driven water:plastoquinone oxidoreductase that uses light energy to abstract electrons from H(2)O, generating O(2) and a proton gradient subsequently used for ATP formation. It consists of a core antenna complex that captures photons, and an electron transfer chain that converts photonic excitation into a charge separation. The sequence is that of Photosystem II reaction center protein J from Pinus thunbergii (Japanese black pine).